The following is a 168-amino-acid chain: Regulatory protein RecX (168 aa).

The protein belongs to the RecX family.

Its subcellular location is the cytoplasm. Modulates RecA activity. The polypeptide is Regulatory protein RecX (Serratia proteamaculans (strain 568)).